We begin with the raw amino-acid sequence, 1960 residues long: MAQQAADKYLYVDKNFINNPLAQADWAAKKLVWVPSSKNGFEPASLKEEVGEEAIVELVENGKKVKVNKDDIQKMNPPKFSKVEDMAELTCLNEASVLHNLKERYYSGLIYTYSGLFCVVINPYKNLPIYSEEIVEMYKGKKRHEMPPHIYAITDTAYRSMMQDREDQSILCTGESGAGKTENTKKVIQYLAHVASSHKSKKDQGELERQLLQANPILEAFGNAKTVKNDNSSRFGKFIRINFDVNGYIVGANIETYLLEKSRAIRQAKEERTFHIFYYLLSGAGEHLKTDLLLEPYNKYRFLSNGHVTIPGQQDKDMFQETMEAMRIMGIPEDEQMGLLRVISGVLQLGNIAFKKERNTDQASMPDNTAAQKVSHLLGINVTDFTRGILTPRIKVGRDYVQKAQTKEQADFAIEALAKATYERMFRWLVLRINKALDKTKRQGASFIGILDIAGFEIFDLNSFEQLCINYTNEKLQQLFNHTMFILEQEEYQREGIEWNFIDFGLDLQPCIDLIEKPAGPPGILALLDEECWFPKATDKSFVEKVVQEQGTHPKFQKPKQLKDKADFCIIHYAGKVDYKADEWLMKNMDPLNDNIATLLHQSSDKFVSELWKDVDRIIGLDQVAGMSETALPGAFKTRKGMFRTVGQLYKEQLAKLMATLRNTNPNFVRCIIPNHEKKAGKLDPHLVLDQLRCNGVLEGIRICRQGFPNRVVFQEFRQRYEILTPNSIPKGFMDGKQACVLMIKALELDSNLYRIGQSKVFFRAGVLAHLEEERDLKITDVIIGFQACCRGYLARKAFAKRQQQLTAMKVLQRNCAAYLRLRNWQWWRLFTKVKPLLNSIRHEDELLAKEAELTKVREKHLAAENRLTEMETMQSQLMAEKLQLQEQLQAETELCAEAEELRARLTAKKQELEEICHDLEARVEEEEERCQYLQAEKKKMQQNIQELEEQLEEEESARQKLQLEKVTTEAKLKKLEEDQIIMEDQNCKLAKEKKLLEDRVAEFTTNLMEEEEKSKSLAKLKNKHEAMITDLEERLRREEKQRQELEKTRRKLEGDSTDLSDQIAELQAQIAELKMQLAKKEEELQAALARVEEEAAQKNMALKKIRELETQISELQEDLESERASRNKAEKQKRDLGEELEALKTELEDTLDSTAAQQELRSKREQEVSILKKTLEDEAKTHEAQIQEMRQKHSQAVEELADQLEQTKRVKATLEKAKQTLENERGELANEVKALLQGKGDSEHKRKKVEAQLQELQVKFSEGERVRTELADKVTKLQVELDSVTGLLSQSDSKSSKLTKDFSALESQLQDTQELLQEENRQKLSLSTKLKQMEDEKNSFREQLEEEEEAKRNLEKQIATLHAQVTDMKKKMEDGVGCLETAEEAKRRLQKDLEGLSQRLEEKVAAYDKLEKTKTRLQQELDDLLVDLDHQRQSVSNLEKKQKKFDQLLAEEKTISAKYAEERDRAEAEAREKETKALSLARALEEAMEQKAELERLNKQFRTEMEDLMSSKDDVGKSVHELEKSKRALEQQVEEMKTQLEELEDELQATEDAKLRLEVNLQAMKAQFERDLQGRDEQSEEKKKQLVRQVREMEAELEDERKQRSMAMAARKKLEMDLKDLEAHIDTANKNREEAIKQLRKLQAQMKDCMRELDDTRASREEILAQAKENEKKLKSMEAEMIQLQEELAAAERAKRQAQQERDELADEIANSSGKGALALEEKRRLEARIAQLEEELEEEQGNTELINDRLKKANLQIDQINTDLNLERSHAQKNENARQQLERQNKELKAKLQEMESAVKSKYKASIAALEAKIAQLEEQLDNETKERQAASKQVRRTEKKLKDVLLQVEDERRNAEQFKDQADKASTRLKQLKRQLEEAEEEAQRANASRRKLQRELEDATETADAMNREVSSLKNKLRRGDLPFVVTRRIVRKGTGDCSDEEVDGKADGADAKAAE.

An N-acetylalanine modification is found at A2. Positions 2-838 (AQQAADKYLY…RLFTKVKPLL (837 aa)) are mediates interaction with LIMCH1. At K8 the chain carries N6-acetyllysine. Position 11 is a phosphotyrosine (Y11). The region spanning 27 to 77 (AAKKLVWVPSSKNGFEPASLKEEVGEEAIVELVENGKKVKVNKDDIQKMNP) is the Myosin N-terminal SH3-like domain. The region spanning 81-776 (SKVEDMAELT…VLAHLEEERD (696 aa)) is the Myosin motor domain. K102 is subject to N6-acetyllysine. Residue 174–181 (GESGAGKT) participates in ATP binding. An N6-acetyllysine mark is found at K299, K435, and K613. The residue at position 628 (S628) is a Phosphoserine. The interval 654 to 676 (LAKLMATLRNTNPNFVRCIIPNH) is actin-binding. Y754 is modified (phosphotyrosine). The IQ domain occupies 779–808 (ITDVIIGFQACCRGYLARKAFAKRQQQLTA). Positions 841-1926 (IRHEDELLAK…LKNKLRRGDL (1086 aa)) form a coiled coil. An N6-succinyllysine modification is found at K850. K860, K975, and K1024 each carry N6-acetyllysine. Residues 1035–1055 (RLRREEKQRQELEKTRRKLEG) show a composition bias toward basic and acidic residues. The disordered stretch occupies residues 1035–1057 (RLRREEKQRQELEKTRRKLEGDS). A Phosphoserine modification is found at S1114. Positions 1117-1167 (QEDLESERASRNKAEKQKRDLGEELEALKTELEDTLDSTAAQQELRSKREQ) are disordered. Positions 1122–1148 (SERASRNKAEKQKRDLGEELEALKTEL) are enriched in basic and acidic residues. K1234 and K1249 each carry N6-acetyllysine. Positions 1327–1352 (LSTKLKQMEDEKNSFREQLEEEEEAK) are disordered. Residues 1332–1352 (KQMEDEKNSFREQLEEEEEAK) are compositionally biased toward basic and acidic residues. An N6-acetyllysine mark is found at K1357, K1392, K1404, K1410, K1459, and K1638. The residue at position 1669 (K1669) is an N6-succinyllysine. S1714 carries the post-translational modification Phosphoserine. Positions 1768–1788 (LERSHAQKNENARQQLERQNK) are disordered. N6-acetyllysine is present on residues K1793, K1802, and K1845. The disordered stretch occupies residues 1877 to 1908 (RQLEEAEEEAQRANASRRKLQRELEDATETAD). R1923 carries the omega-N-methylarginine modification. T1939 bears the Phosphothreonine mark. The segment at 1939-1960 (TGDCSDEEVDGKADGADAKAAE) is disordered. S1943 bears the Phosphoserine mark. Residues 1948–1960 (DGKADGADAKAAE) are compositionally biased toward basic and acidic residues.

This sequence belongs to the TRAFAC class myosin-kinesin ATPase superfamily. Myosin family. In terms of assembly, myosin is a hexameric protein that consists of 2 heavy chain subunits (MHC), 2 alkali light chain subunits (MLC) and 2 regulatory light chain subunits (MLC-2). Interacts with RASIP1. Interacts with DDR1. Interacts with PDLIM2. Interacts with SVIL. Interacts with HTRA3. Interacts with Myo7a. Interacts with CFAP95. Interacts with LIMCH1; independently of the integration of MYH9 into the myosin complex. Interacts with RAB3A. Interacts with ZBED4. Interacts with S100A4; this interaction increases cell motility. Post-translationally, ISGylated. Ubiquitination.

It localises to the cytoplasm. Its subcellular location is the cytoskeleton. The protein resides in the cell cortex. The protein localises to the cytoplasmic vesicle. It is found in the secretory vesicle. It localises to the cortical granule. Functionally, cellular myosin that appears to play a role in cytokinesis, cell shape, and specialized functions such as secretion and capping. Required for cortical actin clearance prior to oocyte exocytosis. Promotes cell motility in conjunction with S100A4. During cell spreading, plays an important role in cytoskeleton reorganization, focal contact formation (in the margins but not the central part of spreading cells), and lamellipodial retraction; this function is mechanically antagonized by MYH10. The protein is Myosin-9 (Myh9) of Mus musculus (Mouse).